Consider the following 241-residue polypeptide: Centromere protein H (241 aa).

An N-acetylmethionine modification is found at Met1. A disordered region spans residues 1–24; that stretch reads MEEQPRERSEAGAEACEEKRGLSQ. Positions 28 to 186 form a coiled coil; the sequence is ERIEDRISLL…KEDVDKMENS (159 aa). Lys61 participates in a covalent cross-link: Glycyl lysine isopeptide (Lys-Gly) (interchain with G-Cter in SUMO2). Residue Thr62 is modified to Phosphothreonine.

It belongs to the CENP-H/MCM16 family. In terms of assembly, self-associates. Component of the CENPA-NAC complex, at least composed of CENPA, CENPC, CENPH, CENPM, CENPN, CENPT and CENPU. The CENPA-NAC complex interacts with the CENPA-CAD complex, composed of CENPI, CENPK, CENPL, CENPO, CENPP, CENPQ, CENPR and CENPS. Interacts directly with CENPK. Interacts with KIF2C and NDC80. Interacts with TRIM36. Abundantly expressed in thymus, spleen, uterus, ovary, testis and muscle, and weakly expressed in small intestine, lung and stomach. Barely detectable expression in kidney, liver, skin and prostate gland. Not detected in brain, heart or adrenal gland. Also expressed weakly in various hematopoietic cell lines.

It localises to the nucleus. Its subcellular location is the chromosome. The protein resides in the centromere. The protein localises to the kinetochore. In terms of biological role, component of the CENPA-NAC (nucleosome-associated) complex, a complex that plays a central role in assembly of kinetochore proteins, mitotic progression and chromosome segregation. The CENPA-NAC complex recruits the CENPA-CAD (nucleosome distal) complex and may be involved in incorporation of newly synthesized CENPA into centromeres. Required for chromosome congression and efficiently align the chromosomes on a metaphase plate. In Mus musculus (Mouse), this protein is Centromere protein H.